A 456-amino-acid chain; its full sequence is Crinkler effector protein 2 (456 aa).

The N-terminal stretch at 1–17 is a signal peptide; it reads MVKLVCAIVGVAGSAFP. Residues 18 to 54 are LQLFLAK domain; the sequence is VDTDASQLVGDLKKAIKAENAMTFTGDAKDLQLFLAK. The segment at 55–136 is DWL domain; the sequence is QPVDDESGKE…NMELPSSEQI (82 aa). An HVLVXXP motif motif is present at residues 137-143; that stretch reads HVLVVVP. A glycan (N-linked (GlcNAc...) asparagine) is linked at asparagine 338.

This sequence belongs to the Crinkler effector family.

It localises to the secreted. The protein localises to the host nucleus. Its function is as follows. Secreted effector that effector that induces cell death when expressed in host plants. Induces the expression of defense response genes in tomato. This is Crinkler effector protein 2 from Phytophthora infestans (Potato late blight agent).